Consider the following 127-residue polypeptide: Small ribosomal subunit protein uS11 (127 aa).

Belongs to the universal ribosomal protein uS11 family. Part of the 30S ribosomal subunit. Interacts with proteins S7 and S18. Binds to IF-3.

Located on the platform of the 30S subunit, it bridges several disparate RNA helices of the 16S rRNA. Forms part of the Shine-Dalgarno cleft in the 70S ribosome. The protein is Small ribosomal subunit protein uS11 of Streptococcus mutans serotype c (strain ATCC 700610 / UA159).